Reading from the N-terminus, the 298-residue chain is Anamorsin homolog (298 aa).

The tract at residues 1-143 (MTQLIITYQS…IKAEKPSWKP (143 aa)) is N-terminal SAM-like domain. The segment at 143–162 (PEEGKVLVDDIDLEGSVPDI) is linker. The [2Fe-2S] cluster site is built by Cys-175, Cys-182, Cys-185, and Cys-187. Residues 175-187 (CKSKERACNNCNC) form a fe-S binding site A region. Residues Cys-218, Cys-221, Cys-229, and Cys-232 each contribute to the [4Fe-4S] cluster site. 2 consecutive short sequence motifs (cx2C motif) follow at residues 218–221 (CGNC) and 229–232 (CSGC). A fe-S binding site B region spans residues 218–232 (CGNCYLGDAFRCSGC).

Belongs to the anamorsin family. As to quaternary structure, monomer. It depends on [2Fe-2S] cluster as a cofactor. The cofactor is [4Fe-4S] cluster.

The protein resides in the cytoplasm. The protein localises to the mitochondrion intermembrane space. Component of the cytosolic iron-sulfur (Fe-S) protein assembly (CIA) machinery. Required for the maturation of extramitochondrial Fe-S proteins. Part of an electron transfer chain functioning in an early step of cytosolic Fe-S biogenesis, facilitating the de novo assembly of a [4Fe-4S] cluster on the cytosolic Fe-S scaffold complex. Electrons are transferred from NADPH via a FAD- and FMN-containing diflavin oxidoreductase. Together with the diflavin oxidoreductase, also required for the assembly of the diferric tyrosyl radical cofactor of ribonucleotide reductase (RNR), probably by providing electrons for reduction during radical cofactor maturation in the catalytic small subunit. The chain is Anamorsin homolog from Cryptosporidium hominis.